Here is a 1273-residue protein sequence, read N- to C-terminus: DNA-directed RNA polymerase subunit beta (1273 aa).

The protein belongs to the RNA polymerase beta chain family. The RNAP catalytic core consists of 2 alpha, 1 beta, 1 beta' and 1 omega subunit. When a sigma factor is associated with the core the holoenzyme is formed, which can initiate transcription.

The enzyme catalyses RNA(n) + a ribonucleoside 5'-triphosphate = RNA(n+1) + diphosphate. In terms of biological role, DNA-dependent RNA polymerase catalyzes the transcription of DNA into RNA using the four ribonucleoside triphosphates as substrates. This is DNA-directed RNA polymerase subunit beta from Phytoplasma mali (strain AT).